A 690-amino-acid chain; its full sequence is Wilms tumor protein 1-interacting protein homolog (690 aa).

Disordered regions lie at residues 151 to 316 (MSAT…VSPR) and 328 to 372 (TLGS…PRSS). The span at 152-186 (SATSPRSSMASSASSSQEHSKYSSPRSSISSNALS) shows a compositional bias: low complexity. Polar residues-rich tracts occupy residues 204–214 (EKYTSPRSSLG), 223–233 (PRSSYASTTSD), 240–261 (PRAS…TSGI), and 272–292 (PRSS…SYSD). The span at 335-357 (SVVSPRSSISSHSSRSSRSSRGS) shows a compositional bias: low complexity. 3 consecutive LIM zinc-binding domains span residues 479–540 (GICI…SGFQ), 544–603 (DKCF…TVFA), and 604–673 (PKCA…RLSV).

Belongs to the zyxin/ajuba family. Interacts with prickle3.

The protein localises to the cell junction. It localises to the adherens junction. Its subcellular location is the nucleus. May monitor slit diaphragm protein assembly, a specialized adherens junction characteristic of podocytes. In case of podocyte injury, it shuttles into the nucleus and acts as a transcription regulator. Plays a role in the regulation of cell morphology and cytoskeletal organization. Acts as a transcriptional corepressor for snai1 and snai2/slug and plays a role in regulating neural crest development. Involved in the organization of the basal body. Involved in cilia growth and positioning. The sequence is that of Wilms tumor protein 1-interacting protein homolog (wtip) from Xenopus laevis (African clawed frog).